Consider the following 1043-residue polypeptide: Desmoglein-1 (1043 aa).

An N-terminal signal peptide occupies residues M1–S23. The propeptide occupies D24–R49. Cadherin domains follow at residues E50–S158, M159–E270, L271–F385, and R386–S498. The Extracellular segment spans residues E50–P551. Residues N110 and N180 are each glycosylated (N-linked (GlcNAc...) asparagine). N496 carries an N-linked (GlcNAc...) asparagine glycan. A helical membrane pass occupies residues A552 to M572. At C573–K1043 the chain is on the cytoplasmic side. The tract at residues D770–P807 is disordered. 5 Desmoglein repeat repeats span residues T819–E845, S846–V875, G876–I905, A906–I933, and Q934–V962.

Binds to JUP/plakoglobin. Interacts with PKP2. Interacts with DSC3; there is evidence to suggest that the interaction promotes cell-cell adhesion of keratinocytes. In terms of tissue distribution, expressed in the epidermis. Expressed in the muzzle epithelium.

Its subcellular location is the cell membrane. The protein resides in the cell junction. The protein localises to the desmosome. It is found in the cytoplasm. It localises to the nucleus. Component of intercellular desmosome junctions. Involved in the interaction of plaque proteins and intermediate filaments mediating cell-cell adhesion. This Bos taurus (Bovine) protein is Desmoglein-1 (DSG1).